The following is a 183-amino-acid chain: Secreted RxLR effector protein 41 (183 aa).

A signal peptide spans 1–18 (MLGFVTGVLAISAHVIVS). The RxLR-dEER signature appears at 41 to 65 (RRLRSYETDTASARAEEGTSDIEER). Asparagine 88 carries an N-linked (GlcNAc...) asparagine glycan.

This sequence belongs to the RxLR effector family.

Its subcellular location is the secreted. The protein resides in the host nucleus. The protein localises to the host cytoplasm. Its function is as follows. Secreted effector that dos not suppress the host cell death induced by cell death-inducing proteins. The protein is Secreted RxLR effector protein 41 of Plasmopara viticola (Downy mildew of grapevine).